Reading from the N-terminus, the 994-residue chain is Protein translocase subunit SecA (994 aa).

ATP contacts are provided by residues Gln85, 103–107 (GEGKT), and Asp492. Over residues 868–888 (IPDGAGPVADAQPVRPAAARQ) the composition is skewed to low complexity. Positions 868–994 (IPDGAGPVAD…HGDPARRNTE (127 aa)) are disordered. Positions 889–900 (TPPPPSPVPSAP) are enriched in pro residues. 4 residues coordinate Zn(2+): Cys973, Cys975, Cys984, and His985. Residues 984-994 (CHGDPARRNTE) show a composition bias toward basic and acidic residues.

Belongs to the SecA family. As to quaternary structure, monomer and homodimer. Part of the essential Sec protein translocation apparatus which comprises SecA, SecYEG and auxiliary proteins SecDF. Other proteins may also be involved. Requires Zn(2+) as cofactor.

The protein resides in the cell membrane. It is found in the cytoplasm. The catalysed reaction is ATP + H2O + cellular proteinSide 1 = ADP + phosphate + cellular proteinSide 2.. Its function is as follows. Part of the Sec protein translocase complex. Interacts with the SecYEG preprotein conducting channel. Has a central role in coupling the hydrolysis of ATP to the transfer of proteins into and across the cell membrane, serving as an ATP-driven molecular motor driving the stepwise translocation of polypeptide chains across the membrane. This chain is Protein translocase subunit SecA, found in Frankia casuarinae (strain DSM 45818 / CECT 9043 / HFP020203 / CcI3).